We begin with the raw amino-acid sequence, 234 residues long: Gem-associated protein 8 (234 aa).

Positions 60–116 (LAQSPAAKGGTSPKSRSKSPSASGDACRRRSRPGKPGPQRRSTEKPARFAEDNDSES) are disordered. Low complexity predominate over residues 67-83 (KGGTSPKSRSKSPSASG). A compositionally biased stretch (basic and acidic residues) spans 100–110 (RSTEKPARFAE). Positions 130–153 (ITDELRQYFAETEQHREELRRQHQ) form a coiled coil.

Part of the core SMN complex that contains SMN1, GEMIN2/SIP1, DDX20/GEMIN3, GEMIN4, GEMIN5, GEMIN6, GEMIN7, GEMIN8 and STRAP/UNRIP. Part of the SMN-Sm complex that contains SMN1, GEMIN2/SIP1, DDX20/GEMIN3, GEMIN4, GEMIN5, GEMIN6, GEMIN7, GEMIN8, STRAP/UNRIP and the Sm proteins SNRPB, SNRPD1, SNRPD2, SNRPD3, SNRPE, SNRPF and SNRPG. Interacts with GEMIN6; the interaction is direct. Interacts with GEMIN7; the interaction is direct. Interacts with SMN1; the interaction is direct. Interacts with GEMIN4; the interaction is direct.

The protein resides in the nucleus. It is found in the gem. Its subcellular location is the cytoplasm. Functionally, the SMN complex catalyzes the assembly of small nuclear ribonucleoproteins (snRNPs), the building blocks of the spliceosome, and thereby plays an important role in the splicing of cellular pre-mRNAs. Most spliceosomal snRNPs contain a common set of Sm proteins SNRPB, SNRPD1, SNRPD2, SNRPD3, SNRPE, SNRPF and SNRPG that assemble in a heptameric protein ring on the Sm site of the small nuclear RNA to form the core snRNP (Sm core). In the cytosol, the Sm proteins SNRPD1, SNRPD2, SNRPE, SNRPF and SNRPG are trapped in an inactive 6S pICln-Sm complex by the chaperone CLNS1A that controls the assembly of the core snRNP. To assemble core snRNPs, the SMN complex accepts the trapped 5Sm proteins from CLNS1A forming an intermediate. Binding of snRNA inside 5Sm triggers eviction of the SMN complex, thereby allowing binding of SNRPD3 and SNRPB to complete assembly of the core snRNP. This is Gem-associated protein 8 (GEMIN8) from Bos taurus (Bovine).